An 84-amino-acid polypeptide reads, in one-letter code: Cell division topological specificity factor (84 aa).

The protein belongs to the MinE family.

Its function is as follows. Prevents the cell division inhibition by proteins MinC and MinD at internal division sites while permitting inhibition at polar sites. This ensures cell division at the proper site by restricting the formation of a division septum at the midpoint of the long axis of the cell. This chain is Cell division topological specificity factor, found in Ralstonia nicotianae (strain ATCC BAA-1114 / GMI1000) (Ralstonia solanacearum).